We begin with the raw amino-acid sequence, 122 residues long: Small ribosomal subunit protein bS16 (122 aa).

The protein belongs to the bacterial ribosomal protein bS16 family.

The chain is Small ribosomal subunit protein bS16 from Prochlorococcus marinus (strain MIT 9313).